Reading from the N-terminus, the 208-residue chain is Type 4 adapter protein LvgA (208 aa).

The tract at residues 184–208 is disordered; the sequence is GYGYPPESPRENYKHPVSSATTARK.

The T4BSS is a complex nanomachine composed of several subcomplexes. This subunit is part of the Type IV Coupling Complex (T4CC), a subcomplex composed of the DotLMNYZ core and the IcmSW-LvgA adapter subunits, linked by the C-terminal tail of DotL.

The protein localises to the cytoplasm. Functionally, component of the Dot/Icm type IVB secretion system (T4BSS), which is used to inject bacterial effector proteins into eukaryotic host cells. Part of a subcomplex which recruits effector proteins and delivers them to the core transmembrane subcomplex. Is a critical subunit for binding a subset of effector proteins. Recognizes more than one type of binding motif. May be a critical factor that confers host specificity. Necessary for full virulence of the bacterium in guinea pigs and presumably humans. This Legionella pneumophila protein is Type 4 adapter protein LvgA.